The following is a 412-amino-acid chain: Palmitoyltransferase ZDHHC6 (412 aa).

Topologically, residues 1 to 24 are cytoplasmic; it reads MNILSAIIVFENLHEVKRLFHWGP. Residues 25–45 traverse the membrane as a helical segment; sequence IIALTVIGVCSSMAILDSIIW. Residues 46 to 57 lie on the Lumenal side of the membrane; sequence YWPLDTTGGSIN. Residues 58–78 form a helical membrane-spanning segment; sequence FIMLINWTVLILYNYFNAMFV. The Cytoplasmic segment spans residues 79–143; it reads GPGYIPLEWK…NCCGHLNHAY (65 aa). The DHHC domain maps to 99 to 149; the sequence is QFCRLCQGYKAPRSHHCRKCNRCVMKMDHHCPWINNCCGHLNHAYFTSFLL. Catalysis depends on cysteine 129, which acts as the S-palmitoyl cysteine intermediate. Residues 144-164 form a helical membrane-spanning segment; the sequence is FTSFLLLAPLGCIHAALIFIM. The Lumenal portion of the chain corresponds to 165–205; the sequence is TMYTQLYDRISFGWSSVKIDMSAARHIHHPIMPFSIAAFAA. Residues 206 to 226 traverse the membrane as a helical segment; it reads TLFALGLALGTTIAVGMLFFI. Residues 227-412 lie on the Cytoplasmic side of the membrane; that stretch reads QMKVILRNRT…NSTSEEKKEQ (186 aa). An SH3 domain is found at 313–398; it reads QRSVEYRVVE…PRRCVEKCLY (86 aa). Residues cysteine 328, cysteine 329, and cysteine 343 are each lipidated (S-palmitoyl cysteine). Residues 409–412 carry the Di-lysine motif motif; that stretch reads KKEQ.

The protein belongs to the DHHC palmitoyltransferase family.

It localises to the endoplasmic reticulum membrane. It catalyses the reaction L-cysteinyl-[protein] + hexadecanoyl-CoA = S-hexadecanoyl-L-cysteinyl-[protein] + CoA. It carries out the reaction L-cysteinyl-[protein] + octadecanoyl-CoA = S-octadecanoyl-L-cysteinyl-[protein] + CoA. In terms of biological role, endoplasmic reticulum palmitoyl acyltransferase that probably catalyzes the addition of palmitate onto various protein substrates and is involved in a variety of cellular processes. Could also function as a stearoyltransferase. This Danio rerio (Zebrafish) protein is Palmitoyltransferase ZDHHC6.